The primary structure comprises 90 residues: UPF0235 protein CPn_0497/CP_0257/CPj0497/CpB0517 (90 aa).

Belongs to the UPF0235 family.

The sequence is that of UPF0235 protein CPn_0497/CP_0257/CPj0497/CpB0517 from Chlamydia pneumoniae (Chlamydophila pneumoniae).